The following is a 100-amino-acid chain: MKISEEEVRHVAKLSKLSFSESETTTFATTLSKIVDMVELLNEVDTEGVAITTTMADKKNVMRQDIAEEGTDRALLFKNVPEKENHFIKVPAILDDGGDA.

It belongs to the GatC family. Heterotrimer of A, B and C subunits.

It catalyses the reaction L-glutamyl-tRNA(Gln) + L-glutamine + ATP + H2O = L-glutaminyl-tRNA(Gln) + L-glutamate + ADP + phosphate + H(+). It carries out the reaction L-aspartyl-tRNA(Asn) + L-glutamine + ATP + H2O = L-asparaginyl-tRNA(Asn) + L-glutamate + ADP + phosphate + 2 H(+). Allows the formation of correctly charged Asn-tRNA(Asn) or Gln-tRNA(Gln) through the transamidation of misacylated Asp-tRNA(Asn) or Glu-tRNA(Gln) in organisms which lack either or both of asparaginyl-tRNA or glutaminyl-tRNA synthetases. The reaction takes place in the presence of glutamine and ATP through an activated phospho-Asp-tRNA(Asn) or phospho-Glu-tRNA(Gln). This is Aspartyl/glutamyl-tRNA(Asn/Gln) amidotransferase subunit C from Streptococcus pyogenes serotype M49 (strain NZ131).